The primary structure comprises 488 residues: Tocopherol cyclase, chloroplastic (488 aa).

Residues 1 to 76 (MEIRSLIVSM…VPTSPNRELR (76 aa)) constitute a chloroplast transit peptide.

It is found in the plastid. The protein localises to the chloroplast. Its subcellular location is the plastoglobule. The enzyme catalyses delta-tocopherol = 2-methyl-6-phytyl-1,4-benzene-1,4-diol. It catalyses the reaction gamma-tocopherol = 2,3-dimethyl-6-phytylbenzene-1,4-diol. The catalysed reaction is delta-tocotrienol = 6-geranylgeranyl-2-methylbenzene-1,4-diol. It carries out the reaction gamma-tocotrienol = 6-geranylgeranyl-2,3-dimethylbenzene-1,4-diol. It functions in the pathway cofactor biosynthesis; tocopherol biosynthesis. In terms of biological role, involved in the synthesis of both tocopherols and tocotrienols (vitamin E), which presumably protect photosynthetic complexes from oxidative stress. Catalyzes the conversion of 2-methyl-6-phytyl-1,4-hydroquinone and 2,3-dimethyl-5-phytyl-1,4-hydroquinone (DMPQ) to delta- and gamma-tocopherol respectively. Also converts 2,3-dimethyl-5-geranylgeranyl-1,4-hydroquinone (DMGQ) to gamma-tocotrienol. This is Tocopherol cyclase, chloroplastic (VTE1) from Arabidopsis thaliana (Mouse-ear cress).